A 198-amino-acid polypeptide reads, in one-letter code: MKQFIDFIPLLLFFIVYKLDPRPVEFAGHGFEFGGIYSATAMLIVSSVVVYGALFLRHGKLEKGQLLTLVACLVFGGLTLAFHSETFLKWKAPVVNWLFALAFAGSHFIGDRVLIKRIMGHALTLPETVWNRLNVAWIGFFLVCGAANLFVAFTFQDFWVDFKVFGSLGMTVIFLVAQGVYLSRHLHDADPSTSKPKD.

Helical transmembrane passes span 36 to 56 (IYSA…ALFL), 64 to 84 (GQLL…AFHS), 90 to 110 (WKAP…HFIG), 135 to 155 (VAWI…AFTF), and 162 to 182 (FKVF…GVYL).

This sequence belongs to the YciB family.

The protein localises to the cell inner membrane. Plays a role in cell envelope biogenesis, maintenance of cell envelope integrity and membrane homeostasis. The sequence is that of Inner membrane-spanning protein YciB from Pseudomonas entomophila (strain L48).